Consider the following 375-residue polypeptide: Glucokinase 1 (375 aa).

25 to 30 provides a ligand contact to ATP; that stretch reads CDVGGS.

The protein belongs to the bacterial glucokinase family. Monomer. The N-terminus is blocked.

It carries out the reaction D-glucose + ATP = D-glucose 6-phosphate + ADP + H(+). This chain is Glucokinase 1 (GK1), found in Trichomonas vaginalis.